We begin with the raw amino-acid sequence, 145 residues long: Large ribosomal subunit protein uL15 (145 aa).

The tract at residues 1-57 (MKLNDLSPAPGSRREKHRPGRGIGSGLGKTGGRGHKGQTSRSGGTIAPGFEGGQQPL) is disordered. The span at 21–31 (RGIGSGLGKTG) shows a compositional bias: gly residues.

This sequence belongs to the universal ribosomal protein uL15 family. In terms of assembly, part of the 50S ribosomal subunit.

Functionally, binds to the 23S rRNA. The protein is Large ribosomal subunit protein uL15 of Pseudomonas fluorescens (strain Pf0-1).